A 243-amino-acid chain; its full sequence is Ubiquinone biosynthesis O-methyltransferase (243 aa).

S-adenosyl-L-methionine contacts are provided by Arg-44, Gly-64, Asp-85, and Met-129.

This sequence belongs to the methyltransferase superfamily. UbiG/COQ3 family.

It carries out the reaction a 3-demethylubiquinol + S-adenosyl-L-methionine = a ubiquinol + S-adenosyl-L-homocysteine + H(+). The catalysed reaction is a 3-(all-trans-polyprenyl)benzene-1,2-diol + S-adenosyl-L-methionine = a 2-methoxy-6-(all-trans-polyprenyl)phenol + S-adenosyl-L-homocysteine + H(+). It functions in the pathway cofactor biosynthesis; ubiquinone biosynthesis. Functionally, O-methyltransferase that catalyzes the 2 O-methylation steps in the ubiquinone biosynthetic pathway. In Erwinia tasmaniensis (strain DSM 17950 / CFBP 7177 / CIP 109463 / NCPPB 4357 / Et1/99), this protein is Ubiquinone biosynthesis O-methyltransferase.